The primary structure comprises 149 residues: Ribonuclease H (149 aa).

The RNase H type-1 domain occupies 1–141 (MKTVTLFSDG…CDTMAREKAT (141 aa)). Mg(2+)-binding residues include Asp9, Glu47, Asp69, and Asp133.

The protein belongs to the RNase H family. In terms of assembly, monomer. It depends on Mg(2+) as a cofactor.

Its subcellular location is the cytoplasm. It carries out the reaction Endonucleolytic cleavage to 5'-phosphomonoester.. In terms of biological role, endonuclease that specifically degrades the RNA of RNA-DNA hybrids. This is Ribonuclease H from Campylobacter curvus (strain 525.92).